Here is a 255-residue protein sequence, read N- to C-terminus: uncharacterized protein (255 aa).

[4Fe-4S] cluster is bound by residues Cys122 and Cys160.

Homodimer. The cofactor is [4Fe-4S] cluster.

This is an uncharacterized protein from Escherichia coli (strain K12).